The following is a 284-amino-acid chain: Polyamine aminopropyltransferase (284 aa).

The 237-residue stretch at 6 to 242 (KGWFTEVCKE…GWWSATLAGH (237 aa)) folds into the PABS domain. Glutamine 36 contacts S-methyl-5'-thioadenosine. 2 residues coordinate spermidine: histidine 67 and aspartate 91. Residues glutamate 111 and 142 to 143 (DG) contribute to the S-methyl-5'-thioadenosine site. Catalysis depends on aspartate 161, which acts as the Proton acceptor. Residue 161 to 164 (DSTD) coordinates spermidine.

It belongs to the spermidine/spermine synthase family. As to quaternary structure, homodimer or homotetramer.

Its subcellular location is the cytoplasm. It carries out the reaction S-adenosyl 3-(methylsulfanyl)propylamine + putrescine = S-methyl-5'-thioadenosine + spermidine + H(+). It participates in amine and polyamine biosynthesis; spermidine biosynthesis; spermidine from putrescine: step 1/1. Catalyzes the irreversible transfer of a propylamine group from the amino donor S-adenosylmethioninamine (decarboxy-AdoMet) to putrescine (1,4-diaminobutane) to yield spermidine. This chain is Polyamine aminopropyltransferase, found in Nitrosococcus oceani (strain ATCC 19707 / BCRC 17464 / JCM 30415 / NCIMB 11848 / C-107).